The sequence spans 296 residues: Small ribosomal subunit protein uS2 (296 aa).

Positions 274–284 are enriched in low complexity; sequence ASSAAPADTWA. The interval 274–296 is disordered; the sequence is ASSAAPADTWAGESGNPDAGVKW.

It belongs to the universal ribosomal protein uS2 family. In terms of assembly, component of the small ribosomal subunit. Mature ribosomes consist of a small (40S) and a large (60S) subunit. The 40S subunit contains about 33 different proteins and 1 molecule of RNA (18S). The 60S subunit contains about 49 different proteins and 3 molecules of RNA (25S, 5.8S and 5S). Interacts with RPS21.

Its subcellular location is the cytoplasm. Functionally, required for the assembly and/or stability of the 40S ribosomal subunit. Required for the processing of the 20S rRNA-precursor to mature 18S rRNA in a late step of the maturation of 40S ribosomal subunits. The polypeptide is Small ribosomal subunit protein uS2 (Ajellomyces capsulatus (strain G186AR / H82 / ATCC MYA-2454 / RMSCC 2432) (Darling's disease fungus)).